Reading from the N-terminus, the 341-residue chain is NADH-quinone oxidoreductase subunit H (341 aa).

Helical transmembrane passes span 6-26, 76-96, 118-138, 157-177, 198-218, 252-272, 278-298, and 313-333; these read LIVSYLVGFVLLNVLLGLMAY, LVFLVAPLLSFALAPLGAAVI, VAVLYVLALGSVGVYGIILGG, VISYELVLGLSLVGVFILSGS, LPNWYILSQPLAFALFLIAAV, FLAEYINMIVVSLLAATLFLG, FADGVWWLALKALFFLFFYVW, and GLAWKVLLPLALLNIGLTGLV.

This sequence belongs to the complex I subunit 1 family. NDH-1 is composed of 14 different subunits. Subunits NuoA, H, J, K, L, M, N constitute the membrane sector of the complex.

The protein localises to the cell membrane. The enzyme catalyses a quinone + NADH + 5 H(+)(in) = a quinol + NAD(+) + 4 H(+)(out). Its function is as follows. NDH-1 shuttles electrons from NADH, via FMN and iron-sulfur (Fe-S) centers, to quinones in the respiratory chain. The immediate electron acceptor for the enzyme in this species is believed to be ubiquinone. Couples the redox reaction to proton translocation (for every two electrons transferred, four hydrogen ions are translocated across the cytoplasmic membrane), and thus conserves the redox energy in a proton gradient. This subunit may bind ubiquinone. This Thermomicrobium roseum (strain ATCC 27502 / DSM 5159 / P-2) protein is NADH-quinone oxidoreductase subunit H.